The primary structure comprises 209 residues: Thymidine kinase (209 aa).

ATP-binding positions include 9 to 16 (SAMNAGKT) and 88 to 91 (DEAQ). Glu-89 (proton acceptor) is an active-site residue.

Belongs to the thymidine kinase family. Homotetramer.

Its subcellular location is the cytoplasm. It catalyses the reaction thymidine + ATP = dTMP + ADP + H(+). This is Thymidine kinase from Xanthomonas campestris pv. campestris (strain 8004).